A 375-amino-acid chain; its full sequence is Succinyl-diaminopimelate desuccinylase (375 aa).

Zn(2+) is bound at residue histidine 66. The active site involves aspartate 68. Aspartate 99 contributes to the Zn(2+) binding site. The active-site Proton acceptor is the glutamate 133. Positions 134, 162, and 348 each coordinate Zn(2+).

The protein belongs to the peptidase M20A family. DapE subfamily. Homodimer. Requires Zn(2+) as cofactor. Co(2+) is required as a cofactor.

It catalyses the reaction N-succinyl-(2S,6S)-2,6-diaminopimelate + H2O = (2S,6S)-2,6-diaminopimelate + succinate. It functions in the pathway amino-acid biosynthesis; L-lysine biosynthesis via DAP pathway; LL-2,6-diaminopimelate from (S)-tetrahydrodipicolinate (succinylase route): step 3/3. Its function is as follows. Catalyzes the hydrolysis of N-succinyl-L,L-diaminopimelic acid (SDAP), forming succinate and LL-2,6-diaminopimelate (DAP), an intermediate involved in the bacterial biosynthesis of lysine and meso-diaminopimelic acid, an essential component of bacterial cell walls. This is Succinyl-diaminopimelate desuccinylase from Escherichia coli O139:H28 (strain E24377A / ETEC).